A 172-amino-acid chain; its full sequence is Ubiquitin-conjugating enzyme E2 2 (172 aa).

A UBC core domain is found at P4 to E150. C88 (glycyl thioester intermediate) is an active-site residue. The residue at position 120 (S120) is a Phosphoserine; by SGV1. A disordered region spans residues V145–D172. Positions D151–D172 are enriched in acidic residues.

Belongs to the ubiquitin-conjugating enzyme family. In terms of assembly, forms a heterodimer complexes with the E3 enzymes BRE1, RAD18 and UBR1. Also interacts with UBR2, RTF1, PAF1 and the RNA polymerase II hyperphosphorylated form. The interaction with RNA polymerase II is BRE1- and PAF1-dependent. The N-terminus is blocked.

Its subcellular location is the cytoplasm. It localises to the nucleus. It carries out the reaction S-ubiquitinyl-[E1 ubiquitin-activating enzyme]-L-cysteine + [E2 ubiquitin-conjugating enzyme]-L-cysteine = [E1 ubiquitin-activating enzyme]-L-cysteine + S-ubiquitinyl-[E2 ubiquitin-conjugating enzyme]-L-cysteine.. It participates in protein modification; protein ubiquitination. Functionally, E2 ubiquitin-conjugating enzyme that accepts ubiquitin from the ubiquitin-activating enzyme E1 and transfers it to a E3 ubiquitin-protein ligase. In association with the E3 enzyme BRE1 and LGE1, it plays a role in transcription regulation by catalyzing the monoubiquitination of histone H2B to form H2BK123ub1. H2BK123ub1 gives a specific tag for epigenetic transcriptional activation, elongation by RNA polymerase II, telomeric silencing, and is also a prerequisite for H3K4me and H3K79me formation. In association with the E3 enzyme RAD18, it catalyzes the monoubiquitination of POL30 'Lys-164', involved in postreplication repair of UV-damaged DNA. The RAD6/UBC2-RAD18 complex is also involved in prevention of spontaneous mutations caused by 7,8-dihydro-8-oxoguanine. In association with the E3 enzyme UBR1, is involved in N-end rule-dependent protein degradation. Also involved in sporulation. This is Ubiquitin-conjugating enzyme E2 2 (RAD6) from Saccharomyces cerevisiae (strain ATCC 204508 / S288c) (Baker's yeast).